The sequence spans 230 residues: Orotidine 5'-phosphate decarboxylase (230 aa).

Residues Asp-11, Lys-34, 61 to 70, Thr-117, Arg-179, Gln-188, Gly-208, and Arg-209 contribute to the substrate site; that span reads DLKLHDIPNT. Residue Lys-63 is the Proton donor of the active site.

It belongs to the OMP decarboxylase family. Type 1 subfamily. As to quaternary structure, homodimer.

It catalyses the reaction orotidine 5'-phosphate + H(+) = UMP + CO2. It participates in pyrimidine metabolism; UMP biosynthesis via de novo pathway; UMP from orotate: step 2/2. Catalyzes the decarboxylation of orotidine 5'-monophosphate (OMP) to uridine 5'-monophosphate (UMP). The chain is Orotidine 5'-phosphate decarboxylase from Streptococcus pyogenes serotype M1.